The following is a 987-amino-acid chain: Ephrin type-B receptor 4 (987 aa).

Positions 1–15 are cleaved as a signal peptide; the sequence is MELRVLLCWASLAAA. The Extracellular segment spans residues 16–539; it reads LEETLLNTKL…ESEGWREQLA (524 aa). Residues 17–202 form the Eph LBD domain; the sequence is EETLLNTKLE…FYKKCAQLTV (186 aa). 2 disulfides stabilise this stretch: Cys-61–Cys-184 and Cys-97–Cys-107. Asn-203, Asn-335, and Asn-426 each carry an N-linked (GlcNAc...) asparagine glycan. 2 consecutive Fibronectin type-III domains span residues 323–432 and 436–529; these read PPSA…TDRE and AVSD…TQLD. A helical membrane pass occupies residues 540–560; sequence LIAGTAVVGVVLVLVVIVVAV. Over 561–987 the chain is Cytoplasmic; sequence LCLRKQSNGR…GGTGGPAPQY (427 aa). Positions 615–899 constitute a Protein kinase domain; that stretch reads VKIEEVIGAG…ENGGASHPLL (285 aa). Residues 621 to 629 and Lys-647 each bind ATP; that span reads IGAGEFGEV. The Proton acceptor role is filled by Asp-740. Ser-769, Ser-770, Ser-911, and Ser-943 each carry phosphoserine. One can recognise an SAM domain in the interval 907–971; that stretch reads SAFGSVGEWL…LASVQHMKSQ (65 aa). Positions 965–987 are disordered; that stretch reads VQHMKSQAKPGTPGGTGGPAPQY. Phosphothreonine is present on Thr-976. Residues 976–987 are compositionally biased toward gly residues; it reads TPGGTGGPAPQY. Positions 985–987 match the PDZ-binding motif; it reads PQY. Tyr-987 is modified (phosphotyrosine).

This sequence belongs to the protein kinase superfamily. Tyr protein kinase family. Ephrin receptor subfamily. Heterotetramer upon binding of the ligand. The heterotetramer is composed of an ephrin dimer and a receptor dimer. Oligomerization is probably required to induce biological responses. Interacts with RASA1; the interaction depends on EPHB4 tyrosine-phosphorylation. In terms of processing, phosphorylated; autophosphorylation is stimulated by EFNB2. As to expression, abundantly expressed in placenta but also detected in kidney, liver, lung, pancreas, skeletal muscle and heart. Expressed in primitive and myeloid, but not lymphoid, hematopoietic cells. Also observed in cell lines derived from liver, breast, colon, lung, melanocyte and cervix.

It is found in the cell membrane. The catalysed reaction is L-tyrosyl-[protein] + ATP = O-phospho-L-tyrosyl-[protein] + ADP + H(+). Functionally, receptor tyrosine kinase which binds promiscuously transmembrane ephrin-B family ligands residing on adjacent cells, leading to contact-dependent bidirectional signaling into neighboring cells. The signaling pathway downstream of the receptor is referred to as forward signaling while the signaling pathway downstream of the ephrin ligand is referred to as reverse signaling. Together with its cognate ligand/functional ligand EFNB2 it is involved in the regulation of cell adhesion and migration, and plays a central role in heart morphogenesis, angiogenesis and blood vessel remodeling and permeability. EPHB4-mediated forward signaling controls cellular repulsion and segregation from EFNB2-expressing cells. The chain is Ephrin type-B receptor 4 (EPHB4) from Homo sapiens (Human).